Here is a 77-residue protein sequence, read N- to C-terminus: Conotoxin ArMKLT2-0322 (77 aa).

The N-terminal stretch at 1 to 22 (MKLTCVLIIAVLFLIVCQLNTA) is a signal peptide. A propeptide spanning residues 23 to 47 (DDSRDKQEYRAVRLRDAIRNSRGSR) is cleaved from the precursor. Cystine bridges form between cysteine 49–cysteine 62, cysteine 56–cysteine 67, and cysteine 61–cysteine 74.

This sequence belongs to the conotoxin O1 superfamily. In terms of tissue distribution, expressed by the venom duct.

The protein localises to the secreted. This Conus arenatus (Sand-dusted cone) protein is Conotoxin ArMKLT2-0322.